The sequence spans 1807 residues: Nucleoporin nup189 (1807 aa).

The interval 1 to 118 is disordered; it reads MFGQNNSSGF…SGGGLFGSNT (118 aa). GLFG repeat units follow at residues 26 to 29 and 66 to 69; these read GLFG. Polar residues predominate over residues 29–61; sequence GSNSNTPGNTLFGSQNTSTTGFGQNTTQPLFGS. Positions 62-77 are enriched in low complexity; it reads NTNGGLFGNRNNTTTT. Over residues 78-90 the composition is skewed to gly residues; it reads GGTGFGMSSGTGM. The span at 93-108 shows a compositional bias: polar residues; it reads QSNTPAFGGTNNATNP. GLFG repeat units lie at residues 112-115, 152-155, 177-180, 308-311, 335-338, 350-353, 381-384, 399-402, 435-438, and 521-524; these read GLFG. Over residues 565 to 584 the composition is skewed to polar residues; that stretch reads PGTGLFGSTQTNNATSNTGT. The segment at 565 to 685 is disordered; that stretch reads PGTGLFGSTQ…SSTTSQVAPT (121 aa). GLFG repeat units lie at residues 585 to 588, 611 to 614, 627 to 630, and 646 to 649; these read GLFG. Residues 588-600 show a composition bias toward low complexity; that stretch reads GSNNANTTNTGGS. Residues 603 to 644 show a composition bias toward polar residues; the sequence is NKPSTTTGGLFGNTTAQQPSTTTSGLFGASNTNNQAQTSNFG. The segment covering 653 to 663 has biased composition (low complexity); it reads AGQQQQPLQAS. The span at 664 to 685 shows a compositional bias: polar residues; that stretch reads IDQNPYGNNPLFSSTTSQVAPT. The residue at position 724 (Ser724) is a Phosphoserine. Residues 785 to 814 form a disordered region; it reads QNGVKNGNDAKSDSKVQEKAPQNEADGSLK. A compositionally biased stretch (basic and acidic residues) spans 792–802; it reads NDAKSDSKVQE. Residues 822–963 enclose the Peptidase S59 domain; it reads SDDYWMKPSI…GKWIFKVQHF (142 aa). Residues 974-1020 form a disordered region; it reads EENDMSSTSNEAGNLKKYDQPNLKVSGKNDSFVTHHTPGAFPNDSKN. Position 1051 is a phosphoserine (Ser1051). Residues 1082 to 1104 form a disordered region; the sequence is KENNVPLSEDDLSNSSESSNESV. Low complexity predominate over residues 1094 to 1104; that stretch reads SNSSESSNESV.

It belongs to the nucleoporin GLFG family. In terms of assembly, interacts (via G-L-F-G repeats) with rpn15/dss1. Interacts with raf1. As to quaternary structure, interacts with ned1. Post-translationally, nup189 is autocatalytically cleaved in nup98 and nup96.

It is found in the nucleus. Its subcellular location is the nuclear pore complex. In terms of biological role, functions as a component of the nuclear pore complex (NPC). NPC components, collectively referred to as nucleoporins (NUPs), can play the role of both NPC structural components and of docking or interaction partners for transiently associated nuclear transport factors. Active directional transport is assured by both, a Phe-Gly (FG) repeat affinity gradient for these transport factors across the NPC and a transport cofactor concentration gradient across the nuclear envelope. Nup189 is autocatalytically cleaved in vivo in 2 polypeptides which assume different functions in the NPC. Nup98 as one of the FG repeat nucleoporins participates in karyopherin interactions and contains part of the autocatalytic cleavage activity. Nup96 as part of the NUP84 complex is involved in nuclear poly(A)+ RNA and tRNA export. The polypeptide is Nucleoporin nup189 (nup189) (Schizosaccharomyces pombe (strain 972 / ATCC 24843) (Fission yeast)).